We begin with the raw amino-acid sequence, 557 residues long: Urocanate hydratase (557 aa).

A disordered region spans residues 1-20 (MSNPRHNEREVRSPRGDELN). Residues 52–53 (GG), Gln130, 176–178 (GMG), Glu196, Arg201, 242–243 (NA), 263–267 (QTSAH), 273–274 (YL), and Tyr322 each bind NAD(+). The active site involves Cys410. Residue Gly492 participates in NAD(+) binding.

The protein belongs to the urocanase family. Requires NAD(+) as cofactor.

The protein resides in the cytoplasm. The catalysed reaction is 4-imidazolone-5-propanoate = trans-urocanate + H2O. It participates in amino-acid degradation; L-histidine degradation into L-glutamate; N-formimidoyl-L-glutamate from L-histidine: step 2/3. Its function is as follows. Catalyzes the conversion of urocanate to 4-imidazolone-5-propionate. The chain is Urocanate hydratase from Brucella canis (strain ATCC 23365 / NCTC 10854 / RM-666).